Reading from the N-terminus, the 274-residue chain is Dermonecrotic toxin SdSicTox-betaIIB1bviii (274 aa).

Residue His5 is part of the active site. Residues Glu25 and Asp27 each coordinate Mg(2+). The Nucleophile role is filled by His41. 2 disulfides stabilise this stretch: Cys45-Cys51 and Cys47-Cys190. Position 85 (Asp85) interacts with Mg(2+).

The protein belongs to the arthropod phospholipase D family. Class II subfamily. The cofactor is Mg(2+). As to expression, expressed by the venom gland.

Its subcellular location is the secreted. The catalysed reaction is an N-(acyl)-sphingosylphosphocholine = an N-(acyl)-sphingosyl-1,3-cyclic phosphate + choline. It catalyses the reaction an N-(acyl)-sphingosylphosphoethanolamine = an N-(acyl)-sphingosyl-1,3-cyclic phosphate + ethanolamine. The enzyme catalyses a 1-acyl-sn-glycero-3-phosphocholine = a 1-acyl-sn-glycero-2,3-cyclic phosphate + choline. It carries out the reaction a 1-acyl-sn-glycero-3-phosphoethanolamine = a 1-acyl-sn-glycero-2,3-cyclic phosphate + ethanolamine. Functionally, dermonecrotic toxins cleave the phosphodiester linkage between the phosphate and headgroup of certain phospholipids (sphingolipid and lysolipid substrates), forming an alcohol (often choline) and a cyclic phosphate. This toxin acts on sphingomyelin (SM). It may also act on ceramide phosphoethanolamine (CPE), lysophosphatidylcholine (LPC) and lysophosphatidylethanolamine (LPE), but not on lysophosphatidylserine (LPS), and lysophosphatidylglycerol (LPG). It acts by transphosphatidylation, releasing exclusively cyclic phosphate products as second products. Induces dermonecrosis, hemolysis, increased vascular permeability, edema, inflammatory response, and platelet aggregation. This Sicarius cf. damarensis (strain GJB-2008) (Six-eyed sand spider) protein is Dermonecrotic toxin SdSicTox-betaIIB1bviii.